Reading from the N-terminus, the 56-residue chain is Large ribosomal subunit protein bL32 (56 aa).

Residues 1–38 (MAVQQNKKSRSKRGMRRSHDSLSTAQLSVDATSGELHR) are disordered. Over residues 7 to 16 (KKSRSKRGMR) the composition is skewed to basic residues. The span at 21-31 (SLSTAQLSVDA) shows a compositional bias: polar residues.

The protein belongs to the bacterial ribosomal protein bL32 family.

This chain is Large ribosomal subunit protein bL32, found in Shewanella woodyi (strain ATCC 51908 / MS32).